Here is a 248-residue protein sequence, read N- to C-terminus: Probable transcriptional regulatory protein MCA1220 (248 aa).

Belongs to the TACO1 family.

It localises to the cytoplasm. This is Probable transcriptional regulatory protein MCA1220 from Methylococcus capsulatus (strain ATCC 33009 / NCIMB 11132 / Bath).